Reading from the N-terminus, the 443-residue chain is Tryptophan synthase beta chain (443 aa).

Lys110 is modified (N6-(pyridoxal phosphate)lysine).

The protein belongs to the TrpB family. As to quaternary structure, tetramer of two alpha and two beta chains. Pyridoxal 5'-phosphate serves as cofactor.

The enzyme catalyses (1S,2R)-1-C-(indol-3-yl)glycerol 3-phosphate + L-serine = D-glyceraldehyde 3-phosphate + L-tryptophan + H2O. It participates in amino-acid biosynthesis; L-tryptophan biosynthesis; L-tryptophan from chorismate: step 5/5. Functionally, the beta subunit is responsible for the synthesis of L-tryptophan from indole and L-serine. This chain is Tryptophan synthase beta chain, found in Thermococcus onnurineus (strain NA1).